The chain runs to 168 residues: Mediator of RNA polymerase II transcription subunit 7b (168 aa).

Pro residues predominate over residues 1 to 12 (MATATYPPPPPY). The tract at residues 1–33 (MATATYPPPPPYYRLYKDFSENTDSAPEPPPPI) is disordered. Coiled-coil stretches lie at residues 64–92 (KDSNLDYKKELRSLNRELQLHILELADVL) and 132–162 (IMELQIQQRKQAVEDIKRRREEAQGLLKDAF).

This sequence belongs to the Mediator complex subunit 7 family. As to quaternary structure, component of the Mediator complex. Interacts with MEE14/CBP1.

The protein resides in the nucleus. Component of the Mediator complex, a coactivator involved in the regulated transcription of nearly all RNA polymerase II-dependent genes. Mediator functions as a bridge to convey information from gene-specific regulatory proteins to the basal RNA polymerase II transcription machinery. The Mediator complex, having a compact conformation in its free form, is recruited to promoters by direct interactions with regulatory proteins and serves for the assembly of a functional pre-initiation complex with RNA polymerase II and the general transcription factors. The sequence is that of Mediator of RNA polymerase II transcription subunit 7b (MED7B) from Arabidopsis thaliana (Mouse-ear cress).